Here is a 450-residue protein sequence, read N- to C-terminus: UPF0236 protein in vanSb 3'region (450 aa).

Belongs to the UPF0236 family.

This Streptococcus gallolyticus (Streptococcus bovis biotype I) protein is UPF0236 protein in vanSb 3'region.